The sequence spans 459 residues: Cysteine--tRNA ligase (459 aa).

Cys-31 lines the Zn(2+) pocket. Residues 33–43 (PTVYYNPHIGN) carry the 'HIGH' region motif. Cys-216, His-241, and Glu-245 together coordinate Zn(2+). Residues 274-278 (KMSKS) carry the 'KMSKS' region motif. ATP is bound at residue Lys-277.

This sequence belongs to the class-I aminoacyl-tRNA synthetase family. Monomer. Zn(2+) serves as cofactor.

Its subcellular location is the cytoplasm. It catalyses the reaction tRNA(Cys) + L-cysteine + ATP = L-cysteinyl-tRNA(Cys) + AMP + diphosphate. The chain is Cysteine--tRNA ligase from Rickettsia africae (strain ESF-5).